Consider the following 511-residue polypeptide: V-type proton ATPase subunit B, brain isoform (511 aa).

Residue R400 participates in ATP binding.

This sequence belongs to the ATPase alpha/beta chains family. V-ATPase is a heteromultimeric enzyme made up of two complexes: the ATP-hydrolytic V1 complex and the proton translocation V0 complex. The V1 complex consists of three catalytic AB heterodimers that form a heterohexamer, three peripheral stalks each consisting of EG heterodimers, one central rotor including subunits D and F, and the regulatory subunits C and H. The proton translocation complex V0 consists of the proton transport subunit a, a ring of proteolipid subunits c9c'', rotary subunit d, subunits e and f, and the accessory subunits ATP6AP1/Ac45 and ATP6AP2/PRR.

It localises to the apical cell membrane. Its subcellular location is the melanosome. It is found in the cytoplasm. The protein localises to the cytoplasmic vesicle. The protein resides in the secretory vesicle. It localises to the synaptic vesicle membrane. Its subcellular location is the clathrin-coated vesicle membrane. Functionally, non-catalytic subunit of the V1 complex of vacuolar(H+)-ATPase (V-ATPase), a multisubunit enzyme composed of a peripheral complex (V1) that hydrolyzes ATP and a membrane integral complex (V0) that translocates protons. V-ATPase is responsible for acidifying and maintaining the pH of intracellular compartments and in some cell types, is targeted to the plasma membrane, where it is responsible for acidifying the extracellular environment. In renal intercalated cells, can partially compensate the lack of ATP6V1B1 and mediate secretion of protons (H+) into the urine under base-line conditions but not in conditions of acid load. This Pongo abelii (Sumatran orangutan) protein is V-type proton ATPase subunit B, brain isoform (ATP6V1B2).